A 110-amino-acid chain; its full sequence is ATP-dependent Clp protease adapter protein ClpS (110 aa).

It belongs to the ClpS family. Binds to the N-terminal domain of the chaperone ClpA.

Its function is as follows. Involved in the modulation of the specificity of the ClpAP-mediated ATP-dependent protein degradation. In Bartonella quintana (strain Toulouse) (Rochalimaea quintana), this protein is ATP-dependent Clp protease adapter protein ClpS.